We begin with the raw amino-acid sequence, 87 residues long: Small ribosomal subunit protein bS20 (87 aa).

It belongs to the bacterial ribosomal protein bS20 family.

Binds directly to 16S ribosomal RNA. The chain is Small ribosomal subunit protein bS20 from Clostridium perfringens (strain 13 / Type A).